Here is a 368-residue protein sequence, read N- to C-terminus: 3-dehydroquinate synthase (368 aa).

Residues 76–81 (DGEQYK), 110–114 (GVIGD), 134–135 (TT), K147, K156, and 174–177 (CLKT) each bind NAD(+). Zn(2+)-binding residues include E189, H252, and H269.

This sequence belongs to the sugar phosphate cyclases superfamily. Dehydroquinate synthase family. Requires NAD(+) as cofactor. It depends on Co(2+) as a cofactor. Zn(2+) serves as cofactor.

Its subcellular location is the cytoplasm. It carries out the reaction 7-phospho-2-dehydro-3-deoxy-D-arabino-heptonate = 3-dehydroquinate + phosphate. Its pathway is metabolic intermediate biosynthesis; chorismate biosynthesis; chorismate from D-erythrose 4-phosphate and phosphoenolpyruvate: step 2/7. In terms of biological role, catalyzes the conversion of 3-deoxy-D-arabino-heptulosonate 7-phosphate (DAHP) to dehydroquinate (DHQ). The sequence is that of 3-dehydroquinate synthase from Vibrio vulnificus (strain YJ016).